A 406-amino-acid chain; its full sequence is Protein transport protein HofC homolog (406 aa).

The next 3 membrane-spanning stretches (helical) occupy residues 167 to 187 (MVLG…VPQF), 214 to 234 (QNIG…YFYL), and 379 to 399 (MMVI…LPIF).

This sequence belongs to the GSP F family.

It localises to the cell inner membrane. This chain is Protein transport protein HofC homolog (hofC), found in Haemophilus influenzae (strain ATCC 51907 / DSM 11121 / KW20 / Rd).